The chain runs to 493 residues: L-arabinose isomerase 1 (493 aa).

Mn(2+) contacts are provided by glutamate 301, glutamate 326, histidine 343, and histidine 442.

It belongs to the arabinose isomerase family. Mn(2+) serves as cofactor.

The enzyme catalyses beta-L-arabinopyranose = L-ribulose. The protein operates within carbohydrate degradation; L-arabinose degradation via L-ribulose; D-xylulose 5-phosphate from L-arabinose (bacterial route): step 1/3. Functionally, catalyzes the conversion of L-arabinose to L-ribulose. This chain is L-arabinose isomerase 1, found in Bacillus licheniformis (strain ATCC 14580 / DSM 13 / JCM 2505 / CCUG 7422 / NBRC 12200 / NCIMB 9375 / NCTC 10341 / NRRL NRS-1264 / Gibson 46).